A 52-amino-acid polypeptide reads, in one-letter code: UPF0181 protein HD_1137 (52 aa).

The protein belongs to the UPF0181 family.

The chain is UPF0181 protein HD_1137 from Haemophilus ducreyi (strain 35000HP / ATCC 700724).